A 284-amino-acid polypeptide reads, in one-letter code: Phosphatidylserine decarboxylase proenzyme (284 aa).

Active-site charge relay system; for autoendoproteolytic cleavage activity residues include D88, H145, and S248. S248 serves as the catalytic Schiff-base intermediate with substrate; via pyruvic acid; for decarboxylase activity. S248 is modified (pyruvic acid (Ser); by autocatalysis).

The protein belongs to the phosphatidylserine decarboxylase family. PSD-B subfamily. Prokaryotic type I sub-subfamily. In terms of assembly, heterodimer of a large membrane-associated beta subunit and a small pyruvoyl-containing alpha subunit. It depends on pyruvate as a cofactor. In terms of processing, is synthesized initially as an inactive proenzyme. Formation of the active enzyme involves a self-maturation process in which the active site pyruvoyl group is generated from an internal serine residue via an autocatalytic post-translational modification. Two non-identical subunits are generated from the proenzyme in this reaction, and the pyruvate is formed at the N-terminus of the alpha chain, which is derived from the carboxyl end of the proenzyme. The autoendoproteolytic cleavage occurs by a canonical serine protease mechanism, in which the side chain hydroxyl group of the serine supplies its oxygen atom to form the C-terminus of the beta chain, while the remainder of the serine residue undergoes an oxidative deamination to produce ammonia and the pyruvoyl prosthetic group on the alpha chain. During this reaction, the Ser that is part of the protease active site of the proenzyme becomes the pyruvoyl prosthetic group, which constitutes an essential element of the active site of the mature decarboxylase.

Its subcellular location is the cell membrane. It carries out the reaction a 1,2-diacyl-sn-glycero-3-phospho-L-serine + H(+) = a 1,2-diacyl-sn-glycero-3-phosphoethanolamine + CO2. Its pathway is phospholipid metabolism; phosphatidylethanolamine biosynthesis; phosphatidylethanolamine from CDP-diacylglycerol: step 2/2. Functionally, catalyzes the formation of phosphatidylethanolamine (PtdEtn) from phosphatidylserine (PtdSer). This is Phosphatidylserine decarboxylase proenzyme from Delftia acidovorans (strain DSM 14801 / SPH-1).